Reading from the N-terminus, the 87-residue chain is UPF0473 protein Daud_0916 (87 aa).

The protein belongs to the UPF0473 family.

In Desulforudis audaxviator (strain MP104C), this protein is UPF0473 protein Daud_0916.